Reading from the N-terminus, the 368-residue chain is 4-hydroxy-3-methylbut-2-en-1-yl diphosphate synthase (flavodoxin) (368 aa).

4 residues coordinate [4Fe-4S] cluster: Cys-268, Cys-271, Cys-303, and Glu-310.

The protein belongs to the IspG family. Requires [4Fe-4S] cluster as cofactor.

The enzyme catalyses (2E)-4-hydroxy-3-methylbut-2-enyl diphosphate + oxidized [flavodoxin] + H2O + 2 H(+) = 2-C-methyl-D-erythritol 2,4-cyclic diphosphate + reduced [flavodoxin]. It participates in isoprenoid biosynthesis; isopentenyl diphosphate biosynthesis via DXP pathway; isopentenyl diphosphate from 1-deoxy-D-xylulose 5-phosphate: step 5/6. In terms of biological role, converts 2C-methyl-D-erythritol 2,4-cyclodiphosphate (ME-2,4cPP) into 1-hydroxy-2-methyl-2-(E)-butenyl 4-diphosphate. The chain is 4-hydroxy-3-methylbut-2-en-1-yl diphosphate synthase (flavodoxin) from Listeria monocytogenes serotype 4b (strain F2365).